A 60-amino-acid chain; its full sequence is Histidine-rich metal-binding polypeptide (60 aa).

Positions 1-60 are disordered; sequence MAHHEEQHGGHHHHHHHTHHHHYHGGEHHHHHHSSHHEEGCCSTSDSHHQEEGCCHGHHE. Residues 10-35 are compositionally biased toward basic residues; sequence GHHHHHHHTHHHHYHGGEHHHHHHSS. Positions 36-60 are enriched in basic and acidic residues; it reads HHEEGCCSTSDSHHQEEGCCHGHHE. 2 consecutive repeat copies span residues 38–42 and 51–55. Positions 38–55 are 2 X 5 AA repeats of E-E-G-C-C; it reads EEGCCSTSDSHHQEEGCC.

Functionally, strongly binds nickel and zinc. Binds other metals less strongly: cobalt &gt; copper &gt; cadmium &gt; manganese. May act to increase, or at least to preserve, urease activity. Exact function is still unknown. This is Histidine-rich metal-binding polypeptide (hpn) from Helicobacter pylori (strain J99 / ATCC 700824) (Campylobacter pylori J99).